Here is a 322-residue protein sequence, read N- to C-terminus: Beta-1,4-galactosyltransferase 7 (322 aa).

The Cytoplasmic portion of the chain corresponds to Met-1–Trp-9. The helical; Signal-anchor for type II membrane protein transmembrane segment at Val-10–Leu-30 threads the bilayer. Residues Gly-31–Thr-322 lie on the Lumenal side of the membrane. Positions 82, 84, 145, and 146 each coordinate UDP-alpha-D-galactose. Asp-147 contacts Mn(2+). Residues Tyr-177, Gly-185, Trp-207, and Gly-208 each contribute to the UDP-alpha-D-galactose site. Leu-209 contributes to the beta-D-xylose binding site. Glu-210 is a binding site for UDP-alpha-D-galactose. Residues Asp-211 and Asp-212 each contribute to the beta-D-xylose site. N-linked (GlcNAc...) asparagine glycosylation occurs at Asn-236. UDP-alpha-D-galactose is bound by residues His-241, His-243, and Arg-250. Mn(2+) contacts are provided by His-241 and His-243. 2 cysteine pairs are disulfide-bonded: Cys-255/Cys-310 and Cys-300/Cys-308.

The protein belongs to the glycosyltransferase 7 family. It depends on Mn(2+) as a cofactor. In terms of tissue distribution, expressed in male and female adults. Expressed in head.

It localises to the golgi apparatus membrane. The enzyme catalyses 3-O-(beta-D-xylosyl)-L-seryl-[protein] + UDP-alpha-D-galactose = 3-O-(beta-D-galactosyl-(1-&gt;4)-beta-D-xylosyl)-L-seryl-[protein] + UDP + H(+). It participates in protein modification; protein glycosylation. In terms of biological role, transfers galactose from UDP-D-Galactose (UDP-Gal) to the acceptor xylose residue in the linkage tetrasaccharide region of the glycosaminoglycan side chain of proteoglycans. No activity towards beta-GlcNAc, beta-Glc, beta-Gal, and beta-GalNAc as acceptors. The sequence is that of Beta-1,4-galactosyltransferase 7 from Drosophila melanogaster (Fruit fly).